We begin with the raw amino-acid sequence, 265 residues long: Ribonuclease 3 (265 aa).

The RNase III domain occupies 34-157; it reads LAVLTRKLGY…LIGAIYLDSQ (124 aa). Mg(2+) is bound at residue Glu70. Asp74 is a catalytic residue. Mg(2+)-binding residues include Asp143 and Glu146. Glu146 is a catalytic residue. The DRBM domain maps to 185 to 256; that stretch reads DAKSRLQEWL…AELMINQLHK (72 aa).

It belongs to the ribonuclease III family. In terms of assembly, homodimer. It depends on Mg(2+) as a cofactor.

The protein resides in the cytoplasm. The catalysed reaction is Endonucleolytic cleavage to 5'-phosphomonoester.. Functionally, digests double-stranded RNA. Involved in the processing of primary rRNA transcript to yield the immediate precursors to the large and small rRNAs (23S and 16S). Processes some mRNAs, and tRNAs when they are encoded in the rRNA operon. Processes pre-crRNA and tracrRNA of type II CRISPR loci if present in the organism. The sequence is that of Ribonuclease 3 from Psychrobacter arcticus (strain DSM 17307 / VKM B-2377 / 273-4).